The chain runs to 628 residues: Kinesin-like protein subito (628 aa).

A disordered region spans residues Arg-28 to Ala-68. The span at Gln-44–Glu-58 shows a compositional bias: acidic residues. Residues Gly-87–Ile-479 enclose the Kinesin motor domain. Gly-169–Thr-176 is a binding site for ATP. The stretch at Asp-509–Ser-612 forms a coiled coil. The interval Lys-596 to Asp-628 is disordered. Ser-607 is modified (phosphoserine). Position 609 is a phosphothreonine (Thr-609). A Phosphoserine modification is found at Ser-612.

It belongs to the TRAFAC class myosin-kinesin ATPase superfamily. Kinesin family.

It localises to the cytoplasm. Its subcellular location is the cytoskeleton. Required during female meiosis for bipolar spindle formation in the absence of the centrosomes and chromosome homolog segregation. Also has roles in male meiosis and mitotic divisions of the early embryo. The sequence is that of Kinesin-like protein subito (sub) from Drosophila melanogaster (Fruit fly).